We begin with the raw amino-acid sequence, 155 residues long: Large ribosomal subunit protein uL15 (155 aa).

Residues 1–16 are compositionally biased toward basic residues; it reads MVRRFKRAVKYRRGSR. Residues 1 to 35 are disordered; sequence MVRRFKRAVKYRRGSRTHGWGRVGQHRKSGGSGGK.

The protein belongs to the universal ribosomal protein uL15 family. In terms of assembly, part of the 50S ribosomal subunit.

Functionally, binds to the 23S rRNA. The protein is Large ribosomal subunit protein uL15 of Pyrobaculum arsenaticum (strain DSM 13514 / JCM 11321 / PZ6).